We begin with the raw amino-acid sequence, 429 residues long: Glutamyl-tRNA reductase (429 aa).

Substrate-binding positions include 49–52, serine 108, 113–115, and glutamine 119; these read TCNR and EAQ. The active-site Nucleophile is cysteine 50. Position 188-193 (188-193) interacts with NADP(+); the sequence is GAGEMS.

The protein belongs to the glutamyl-tRNA reductase family. As to quaternary structure, homodimer.

It catalyses the reaction (S)-4-amino-5-oxopentanoate + tRNA(Glu) + NADP(+) = L-glutamyl-tRNA(Glu) + NADPH + H(+). It participates in porphyrin-containing compound metabolism; protoporphyrin-IX biosynthesis; 5-aminolevulinate from L-glutamyl-tRNA(Glu): step 1/2. Its function is as follows. Catalyzes the NADPH-dependent reduction of glutamyl-tRNA(Glu) to glutamate 1-semialdehyde (GSA). The protein is Glutamyl-tRNA reductase of Rubrobacter xylanophilus (strain DSM 9941 / JCM 11954 / NBRC 16129 / PRD-1).